The primary structure comprises 1198 residues: Fibronectin type-III domain-containing protein 3a (1198 aa).

Positions 189–201 are enriched in basic and acidic residues; sequence KLKDRHGTQKDKL. A disordered region spans residues 189–256; sequence KLKDRHGTQK…SQTDVEIEEK (68 aa). A compositionally biased stretch (low complexity) spans 229–247; the sequence is GISTGSTKSKSVGKGKSNS. 9 Fibronectin type-III domains span residues 269–370, 374–466, 470–563, 567–661, 665–758, 762–852, 864–951, 952–1045, and 1046–1151; these read NIAK…TMSC, APNL…TSGT, TPAS…TCPD, APSK…TPAV, PCQP…TAPG, QCKP…TPAS, SEDE…TKPL, PPDP…TPKS, and VPAA…TEPP. The disordered stretch occupies residues 553-574; that stretch reads SETVDYTTCPDKPGAPSKPSVK. The chain crosses the membrane as a helical span at residues 1172–1192; that stretch reads VCAAVILALFAIFSILIAVII.

The protein belongs to the FNDC3 family.

It localises to the golgi apparatus membrane. The protein is Fibronectin type-III domain-containing protein 3a (FNDC3A) of Gallus gallus (Chicken).